Here is a 331-residue protein sequence, read N- to C-terminus: MLTLTPVLTVSYEAKISFLFLSVVEFAVGIMANAFIVLVNFWDMVKKQPLNNCDIALLCLSITRLFLQGLLLLDAIQLACFQQMKDPLSHNYQAILTLWMSANQVSLWLAACLSLLYCAKIVRFSHTFPLHLASWVSRRFLQMLLVALLFSGVCTALCLWDFFSRSHTVVTSMLHMNNTEFNLQIEKLNFFYSFVFCNVGSVPPSLVFLISSGVLVISLGNHMRTMKSQTRGSRDPSLEAHVRAIIFLVSFLCFYVVSFCAALISIPLLVLWHNKGGVMVCIGMMAACPSGHAAILISGNAKLKKVIVTILFWFQSRQKVRRVHKVLPRIL.

The Extracellular segment spans residues 1–17 (MLTLTPVLTVSYEAKIS). A helical membrane pass occupies residues 18–38 (FLFLSVVEFAVGIMANAFIVL). Topologically, residues 39–54 (VNFWDMVKKQPLNNCD) are cytoplasmic. The chain crosses the membrane as a helical span at residues 55–75 (IALLCLSITRLFLQGLLLLDA). The Extracellular segment spans residues 76–94 (IQLACFQQMKDPLSHNYQA). A helical transmembrane segment spans residues 95–115 (ILTLWMSANQVSLWLAACLSL). Over 116–142 (LYCAKIVRFSHTFPLHLASWVSRRFLQ) the chain is Cytoplasmic. The helical transmembrane segment at 143 to 163 (MLLVALLFSGVCTALCLWDFF) threads the bilayer. Residues 164–198 (SRSHTVVTSMLHMNNTEFNLQIEKLNFFYSFVFCN) are Extracellular-facing. N-linked (GlcNAc...) asparagine glycosylation is present at Asn-177. The chain crosses the membrane as a helical span at residues 199-219 (VGSVPPSLVFLISSGVLVISL). Topologically, residues 220-243 (GNHMRTMKSQTRGSRDPSLEAHVR) are cytoplasmic. A helical transmembrane segment spans residues 244-264 (AIIFLVSFLCFYVVSFCAALI). Over 265-276 (SIPLLVLWHNKG) the chain is Extracellular. The chain crosses the membrane as a helical span at residues 277-297 (GVMVCIGMMAACPSGHAAILI). Residues 298-331 (SGNAKLKKVIVTILFWFQSRQKVRRVHKVLPRIL) lie on the Cytoplasmic side of the membrane.

It belongs to the G-protein coupled receptor T2R family. In terms of tissue distribution, expressed in tongue, stomach and duodenum.

The protein resides in the membrane. In terms of biological role, putative taste receptor which may play a role in the perception of bitterness. The chain is Taste receptor type 2 member 38 (Tas2r38) from Rattus norvegicus (Rat).